Reading from the N-terminus, the 1216-residue chain is RAB11-binding protein RELCH (1216 aa).

The span at M1–S13 shows a compositional bias: gly residues. Disordered regions lie at residues M1–A67 and N133–G179. A2 bears the N-acetylalanine mark. Residues S20 and S22 each carry the phosphoserine modification. The segment covering D21 to A31 has biased composition (acidic residues). T32 carries the phosphothreonine modification. Phosphoserine is present on residues S54 and S56. Positions G142–G154 are enriched in low complexity. Phosphoserine occurs at positions 180 and 182. Phosphothreonine is present on T183. S186 carries the phosphoserine modification. The stretch at N197–H231 forms a coiled coil. Residues E255 to D287 enclose the LisH domain. Residues L358–T397 adopt a coiled-coil conformation. Residue S385 is modified to Phosphoserine. The tract at residues V409 to K473 is disordered. A compositionally biased stretch (basic and acidic residues) spans D429–I440. Phosphoserine is present on S453. The interaction with RAB11A and RAB11B stretch occupies residues C497–V779. 2 HEAT repeats span residues L601 to L639 and V640 to Q679. Position 792 is a phosphoserine (S792). The HEAT 3 repeat unit spans residues V1004–R1042. S1149 is subject to Phosphoserine.

As to quaternary structure, interacts with RAB11A (VIA-GTP form). Interacts with RAB11B. Interacts (via the third HEAT repeat) with OSBP (via C-terminus). Found in a complex composed of RELCH, OSBP1 and RAB11A.

The protein resides in the recycling endosome. Its subcellular location is the golgi apparatus. It is found in the trans-Golgi network. Its function is as follows. Regulates intracellular cholesterol distribution from recycling endosomes to the trans-Golgi network through interactions with RAB11 and OSBP. Functions in membrane tethering and promotes OSBP-mediated cholesterol transfer between RAB11-bound recycling endosomes and OSBP-bound Golgi-like membranes. In Mus musculus (Mouse), this protein is RAB11-binding protein RELCH (Relch).